The following is an 85-amino-acid chain: Cell division topological specificity factor (85 aa).

This sequence belongs to the MinE family.

Its function is as follows. Prevents the cell division inhibition by proteins MinC and MinD at internal division sites while permitting inhibition at polar sites. This ensures cell division at the proper site by restricting the formation of a division septum at the midpoint of the long axis of the cell. In Xylella fastidiosa (strain M12), this protein is Cell division topological specificity factor.